The chain runs to 288 residues: tRNA pseudouridine synthase B (288 aa).

Asp-38 serves as the catalytic Nucleophile.

It belongs to the pseudouridine synthase TruB family. Type 1 subfamily.

It carries out the reaction uridine(55) in tRNA = pseudouridine(55) in tRNA. Functionally, responsible for synthesis of pseudouridine from uracil-55 in the psi GC loop of transfer RNAs. The polypeptide is tRNA pseudouridine synthase B (Carboxydothermus hydrogenoformans (strain ATCC BAA-161 / DSM 6008 / Z-2901)).